Consider the following 130-residue polypeptide: METNRQKKIGSVIQKDLVDILQGEVRKNGVSNLVISVSKVSVTSDLSVATVYLSIFPQEKAKETLEGIKSNTTLIKHDLSQRVRLQLRRVPNLVFFIDDSLDYIEKIDNALAGKENPIENRDLLDKRRKS.

It belongs to the RbfA family. As to quaternary structure, monomer. Binds 30S ribosomal subunits, but not 50S ribosomal subunits or 70S ribosomes.

The protein localises to the cytoplasm. One of several proteins that assist in the late maturation steps of the functional core of the 30S ribosomal subunit. Associates with free 30S ribosomal subunits (but not with 30S subunits that are part of 70S ribosomes or polysomes). Required for efficient processing of 16S rRNA. May interact with the 5'-terminal helix region of 16S rRNA. The sequence is that of Ribosome-binding factor A from Flavobacterium johnsoniae (strain ATCC 17061 / DSM 2064 / JCM 8514 / BCRC 14874 / CCUG 350202 / NBRC 14942 / NCIMB 11054 / UW101) (Cytophaga johnsonae).